Reading from the N-terminus, the 756-residue chain is Cilium assembly protein DZIP1L (756 aa).

The interval M1–P20 is disordered. A compositionally biased stretch (low complexity) spans P10–P19. A coiled-coil region spans residues D108–T158. The C2H2-type zinc finger occupies H171–H194. Composition is skewed to basic and acidic residues over residues R193–K202, N237–K262, D319–R335, and R344–N365. Disordered regions lie at residues R193–E212, Q233–K262, N310–N365, K409–S466, V531–T626, and I693–A756. 2 coiled-coil regions span residues E196–E283 and E321–T416. Polar residues predominate over residues L534–N558. The segment covering K560 to Q578 has biased composition (basic and acidic residues). Positions T586–Q598 are enriched in pro residues.

This sequence belongs to the DZIP C2H2-type zinc-finger protein family.

It is found in the cytoplasm. It localises to the cytoskeleton. Its subcellular location is the cilium basal body. The protein localises to the microtubule organizing center. The protein resides in the centrosome. It is found in the centriole. In terms of biological role, involved in primary cilium formation. Probably acts as a transition zone protein required for localization of PKD1/PC1 and PKD2/PC2 to the ciliary membrane. In Danio rerio (Zebrafish), this protein is Cilium assembly protein DZIP1L (dzip1l).